A 430-amino-acid polypeptide reads, in one-letter code: Aspartate aminotransferase, mitochondrial (430 aa).

Residues 1–29 (MALLHSARVLSGVASAFHPGLAAAASARA) constitute a mitochondrion transit peptide. Phosphothreonine is present on Thr48. Position 59 is an N6-acetyllysine (Lys59). Gly65 contributes to the substrate binding site. N6-acetyllysine; alternate is present on Lys73. N6-succinyllysine; alternate is present on Lys73. An N6-acetyllysine modification is found at Lys82. The residue at position 90 (Lys90) is an N6-acetyllysine; alternate. N6-succinyllysine; alternate is present on Lys90. Tyr96 carries the post-translational modification 3'-nitrotyrosine; alternate. Tyr96 is modified (phosphotyrosine; alternate). Position 122 is an N6-acetyllysine; alternate (Lys122). The residue at position 122 (Lys122) is an N6-succinyllysine; alternate. Ser143 bears the Phosphoserine mark. Lys159 is subject to N6-acetyllysine; alternate. Lys159 carries the post-translational modification N6-succinyllysine; alternate. Residue Trp162 participates in substrate binding. Lys185 bears the N6-acetyllysine; alternate mark. Lys185 is modified (N6-succinyllysine; alternate). Asn215 is a binding site for substrate. An N6-succinyllysine modification is found at Lys227. Position 234 is an N6-acetyllysine (Lys234). Residues Lys279 and Lys296 each carry the N6-acetyllysine; alternate modification. Lys279 is modified (N6-(pyridoxal phosphate)lysine; alternate). Lys296 is modified (N6-succinyllysine; alternate). An N6-acetyllysine modification is found at Lys302. N6-acetyllysine; alternate is present on Lys309. N6-succinyllysine; alternate is present on Lys309. The residue at position 313 (Arg313) is an Asymmetric dimethylarginine. Lys338 is subject to N6-acetyllysine; alternate. Lys338 is subject to N6-succinyllysine; alternate. Lys345 is modified (N6-acetyllysine). Lys363 is modified (N6-acetyllysine; alternate). Position 363 is an N6-succinyllysine; alternate (Lys363). An N6-acetyllysine mark is found at Lys364 and Lys387. Residues Lys396 and Lys404 each carry the N6-acetyllysine; alternate modification. N6-succinyllysine; alternate occurs at positions 396 and 404. Arg407 is a substrate binding site.

Belongs to the class-I pyridoxal-phosphate-dependent aminotransferase family. In terms of assembly, homodimer. It depends on pyridoxal 5'-phosphate as a cofactor.

The protein localises to the mitochondrion matrix. It localises to the cell membrane. It catalyses the reaction L-aspartate + 2-oxoglutarate = oxaloacetate + L-glutamate. The enzyme catalyses L-kynurenine + 2-oxoglutarate = kynurenate + L-glutamate + H2O. Its function is as follows. Catalyzes the irreversible transamination of the L-tryptophan metabolite L-kynurenine to form kynurenic acid (KA). As a member of the malate-aspartate shuttle, it has a key role in the intracellular NAD(H) redox balance. Is important for metabolite exchange between mitochondria and cytosol, and for amino acid metabolism. Facilitates cellular uptake of long-chain free fatty acids. In Oryctolagus cuniculus (Rabbit), this protein is Aspartate aminotransferase, mitochondrial (GOT2).